The sequence spans 391 residues: Candidapepsin-1 (391 aa).

Residues 1 to 18 (MFLKNIFIALAIALLVDA) form the signal peptide. Residues 19 to 50 (SPAKRSPGFVTLDFDVIKTPVNATGQEGKVKR) constitute a propeptide, activation peptide. N-linked (GlcNAc...) asparagine glycosylation is present at asparagine 40. The Peptidase A1 domain maps to 64-377 (YAADITIGSN…DLDDDKISLA (314 aa)). Residue aspartate 82 is part of the active site. A disulfide bond links cysteine 97 and cysteine 109. Aspartate 267 is a catalytic residue. The cysteines at positions 305 and 343 are disulfide-linked.

The protein belongs to the peptidase A1 family. In terms of processing, O-glycosylated.

The protein localises to the secreted. It catalyses the reaction Preferential cleavage at the carboxyl of hydrophobic amino acids, but fails to cleave 15-Leu-|-Tyr-16, 16-Tyr-|-Leu-17 and 24-Phe-|-Phe-25 of insulin B chain. Activates trypsinogen, and degrades keratin.. The sequence is that of Candidapepsin-1 (SAP1) from Candida albicans (strain WO-1) (Yeast).